A 433-amino-acid polypeptide reads, in one-letter code: Forkhead box protein A2-B (433 aa).

The fork-head DNA-binding region spans 147-241; it reads KPPYSYISLI…ENGCYLRRQK (95 aa). The span at 247–260 shows a compositional bias: basic and acidic residues; it reads KKPSLREGGGKKLS. 2 disordered regions span residues 247 to 337 and 407 to 433; these read KKPS…QSHL and SGLEPSPISSDTSYYQGGYSRPIMNSS. The segment covering 261–282 has biased composition (low complexity); sequence EGASSVGSVGNSSSERSVGNES. The segment covering 292–302 has biased composition (basic and acidic residues); the sequence is EQKRSLVDMKS. The segment covering 315 to 331 has biased composition (low complexity); the sequence is ASQAQHLLSQHHSVLSH. Residues 407–421 are compositionally biased toward polar residues; the sequence is SGLEPSPISSDTSYY.

Its subcellular location is the nucleus. Its function is as follows. Acts as a transcriptional activator during early development, limiting the extent of mesoderm formation in the gastrula. Binds to DNA via the target sequence 5'-GT[AC]AACA-3', with 5'-GTAAACA-3' being the preferred binding site. In Xenopus laevis (African clawed frog), this protein is Forkhead box protein A2-B (foxa2-b).